Consider the following 246-residue polypeptide: MSGDFPTAARAAEILERVRQMRPRVHCLMNTVVQKFTADGITVIGGIPSMTTSLEEIESFVTKADALTVNLGTLDAERRRVIRLAIEIANASGKPWIVDPVHVDYSPSRLDFARELIAQSPTIVRGNRAEMSLIGDVPDVVRIETGPVDHLRDRTRNVSIVNGHPWMAKVTGTGCLSGGVIAAFMAVEKDALTAAASALAVTGVSAELAAQRAKGPGTFEPAFLDALSEISGEDIINHARIEHEQG.

Met50 contributes to the substrate binding site. Residues Arg125 and Thr145 each contribute to the ATP site. Gly172 is a substrate binding site.

Belongs to the Thz kinase family. Requires Mg(2+) as cofactor.

It carries out the reaction 5-(2-hydroxyethyl)-4-methylthiazole + ATP = 4-methyl-5-(2-phosphooxyethyl)-thiazole + ADP + H(+). It functions in the pathway cofactor biosynthesis; thiamine diphosphate biosynthesis; 4-methyl-5-(2-phosphoethyl)-thiazole from 5-(2-hydroxyethyl)-4-methylthiazole: step 1/1. Functionally, catalyzes the phosphorylation of the hydroxyl group of 4-methyl-5-beta-hydroxyethylthiazole (THZ). This chain is Probable hydroxyethylthiazole kinase (thiM), found in Agrobacterium fabrum (strain C58 / ATCC 33970) (Agrobacterium tumefaciens (strain C58)).